The primary structure comprises 86 residues: UPF0457 protein BCE33L2265 (86 aa).

The protein belongs to the UPF0457 family.

The chain is UPF0457 protein BCE33L2265 from Bacillus cereus (strain ZK / E33L).